A 913-amino-acid polypeptide reads, in one-letter code: Chitin synthase 1 (913 aa).

Positions 1–27 (MSGAPPPSSGFAPRSYGQQPLSHAPRS) are disordered. Residues T237, E241, and D291 each coordinate UDP-N-acetyl-alpha-D-glucosamine. A glycan (N-linked (GlcNAc...) asparagine) is linked at N420. The active site involves D496. N510 carries an N-linked (GlcNAc...) asparagine glycan. 6 consecutive transmembrane segments (helical) span residues 539–559 (WLNG…RIYS), 581–601 (YTAF…FIVF), 625–645 (AVYI…IIGL), 658–678 (FVGA…AGIF), 684–704 (TVHS…ASAL), and 711–731 (IFMT…IFTI). The Conserved SWG motif motif lies at 741 to 743 (SWG). 2 helical membrane passes run 800–820 (VLLT…YFAS) and 825–845 (MPVL…GSIG). N867 and N900 each carry an N-linked (GlcNAc...) asparagine glycan.

It belongs to the chitin synthase family. Class II subfamily. In terms of assembly, homodimer. Mn(2+) serves as cofactor.

Its subcellular location is the cell membrane. It carries out the reaction [(1-&gt;4)-N-acetyl-beta-D-glucosaminyl](n) + UDP-N-acetyl-alpha-D-glucosamine = [(1-&gt;4)-N-acetyl-beta-D-glucosaminyl](n+1) + UDP + H(+). With respect to regulation, the activity is inhibited by nikkomycin Z (NikZ). In terms of biological role, polymerizes chitin, a structural polymer of the cell wall and septum, by transferring the sugar moiety of UDP-GlcNAc to the non-reducing end of the growing chitin polymer. Involved in mycelial growth, sporangial production, zoospore release and pathogenesis. The sequence is that of Chitin synthase 1 from Phytophthora sojae (strain P6497) (Soybean stem and root rot agent).